The primary structure comprises 185 residues: Putative gustatory receptor clone PTE01 (185 aa).

The chain crosses the membrane as a helical span at residues 1–11 (MYLFLSNLSLA). Over 12-42 (DISFTSTTLPKMIVDIQTNNRAISYSGCLTQ) the chain is Extracellular. The helical transmembrane segment at 43–62 (MSFFMLFGCLDSLLLTAMAY) threads the bilayer. The Cytoplasmic portion of the chain corresponds to 63 to 84 (DRFVAICHPLHYQVIMNPRLCG). A helical membrane pass occupies residues 85–105 (LLVFLSILISLLVSQLHNSVV). Residues 106-138 (LQLTYFKSVDISHFFCDPSLLLNLACSDTFTNN) lie on the Extracellular side of the membrane. A helical membrane pass occupies residues 139-160 (IVMYFVGAISGFLPISGIFFSY). At 161-182 (YKIVSSILRMPSPGGKYKAFST) the chain is on the cytoplasmic side. A helical transmembrane segment spans residues 183–185 (CGS).

The protein belongs to the G-protein coupled receptor 1 family. As to expression, tongue specific.

Its subcellular location is the cell membrane. Functionally, possible taste receptor. The sequence is that of Putative gustatory receptor clone PTE01 from Rattus norvegicus (Rat).